A 63-amino-acid chain; its full sequence is DNA-directed RNA polymerase subunit omega (63 aa).

The protein belongs to the RNA polymerase subunit omega family. In terms of assembly, the RNAP catalytic core consists of 2 alpha, 1 beta, 1 beta' and 1 omega subunit. When a sigma factor is associated with the core the holoenzyme is formed, which can initiate transcription.

It catalyses the reaction RNA(n) + a ribonucleoside 5'-triphosphate = RNA(n+1) + diphosphate. Promotes RNA polymerase assembly. Latches the N- and C-terminal regions of the beta' subunit thereby facilitating its interaction with the beta and alpha subunits. This chain is DNA-directed RNA polymerase subunit omega, found in Blochmanniella pennsylvanica (strain BPEN).